We begin with the raw amino-acid sequence, 244 residues long: LOB domain-containing protein 17 (244 aa).

The LOB domain maps to 6–108 (SPCGACKFLR…TQLEILKQQA (103 aa)).

The protein belongs to the LOB domain-containing protein family. In terms of tissue distribution, expressed in roots, stems, leaves and flowers.

This is LOB domain-containing protein 17 (LBD17) from Arabidopsis thaliana (Mouse-ear cress).